We begin with the raw amino-acid sequence, 381 residues long: Flagellar P-ring protein (381 aa).

The first 33 residues, 1-33 (MQFFNTLHPTRPHWLLAALCLIASLLGAGTAQA), serve as a signal peptide directing secretion.

It belongs to the FlgI family. The basal body constitutes a major portion of the flagellar organelle and consists of four rings (L,P,S, and M) mounted on a central rod.

Its subcellular location is the periplasm. It is found in the bacterial flagellum basal body. In terms of biological role, assembles around the rod to form the L-ring and probably protects the motor/basal body from shearing forces during rotation. This Albidiferax ferrireducens (strain ATCC BAA-621 / DSM 15236 / T118) (Rhodoferax ferrireducens) protein is Flagellar P-ring protein.